A 432-amino-acid chain; its full sequence is Serine/threonine-protein kinase stk11 (432 aa).

Residues 52–312 (YLMGDLLGEG…IQQIRQHNWF (261 aa)) form the Protein kinase domain. ATP-binding positions include 58-66 (LGEGSYGKV) and Lys-81. The active-site Proton acceptor is the Asp-179. Residue Thr-192 is modified to Phosphothreonine; by autocatalysis. Residues 398–432 (TESQLKTERRVSSSSQRKASTTGSKVRKLSACKQQ) form a disordered region. Positions 409-421 (SSSSQRKASTTGS) are enriched in polar residues. Residues 422–432 (KVRKLSACKQQ) are compositionally biased toward basic residues. Residue Ser-427 is modified to Phosphoserine; by PKA.

Belongs to the protein kinase superfamily. CAMK Ser/Thr protein kinase family. LKB1 subfamily. In terms of assembly, catalytic component of a trimeric complex composed of STK11/LKB1, STRAD (STRADA or STRADB) and CAB39/MO25 (CAB39/MO25alpha or CAB39L/MO25beta). The cofactor is Mg(2+). Mn(2+) serves as cofactor. Post-translationally, phosphorylated by a cAMP-dependent protein kinase. Autophosphorylated in a reaction that prefers Mn(2+) to Mg(2+). Oocytes, eggs and early embryos.

The protein resides in the nucleus. The protein localises to the cytoplasm. The catalysed reaction is L-seryl-[protein] + ATP = O-phospho-L-seryl-[protein] + ADP + H(+). It catalyses the reaction L-threonyl-[protein] + ATP = O-phospho-L-threonyl-[protein] + ADP + H(+). Tumor suppressor serine/threonine-protein kinase that controls the activity of AMP-activated protein kinase (AMPK) family members, thereby playing a role in various processes such as cell metabolism, cell polarity, apoptosis and DNA damage response. Acts by phosphorylating the T-loop of AMPK family proteins, leading to promote their activity. This is Serine/threonine-protein kinase stk11 from Xenopus laevis (African clawed frog).